The following is a 679-amino-acid chain: Glycine--tRNA ligase beta subunit (679 aa).

It belongs to the class-II aminoacyl-tRNA synthetase family. Tetramer of two alpha and two beta subunits.

The protein resides in the cytoplasm. It catalyses the reaction tRNA(Gly) + glycine + ATP = glycyl-tRNA(Gly) + AMP + diphosphate. This chain is Glycine--tRNA ligase beta subunit, found in Streptococcus agalactiae serotype V (strain ATCC BAA-611 / 2603 V/R).